We begin with the raw amino-acid sequence, 1062 residues long: Suppressor of mar1-1 protein (1062 aa).

The segment covering 1-17 (MSENTTAPSDNITNEQR) has biased composition (polar residues). 6 disordered regions span residues 1-27 (MSENTTAPSDNITNEQRLPSGPKDDVD), 188-217 (ENSSNNTSSQHNTSSSRRGPGRPRKDASTS), 267-337 (TKQE…KKRT), 370-398 (SSKFHQIPSSPSNPVSQPAPVRTSRSATQ), 595-634 (EISTRSKIKSAEKPTTKGSSMSPKPRSASISGISDHQQEG), and 681-804 (SGEE…GNLG). At Ser2 the chain carries N-acetylserine. Positions 189–205 (NSSNNTSSQHNTSSSRR) are enriched in low complexity. Polar residues-rich tracts occupy residues 267–279 (TKQESLLLSAPSS), 287–298 (SLTSVPQRTNNE), and 305–323 (STANSSSITPTPVTPNNLI). Residues 325 to 335 (IKRKRGRPPKK) show a composition bias toward basic residues. 2 stretches are compositionally biased toward polar residues: residues 370-385 (SSKFHQIPSSPSNPVS) and 610-629 (TKGSSMSPKPRSASISGISD). Phosphoserine occurs at positions 378, 379, 628, and 681. Over residues 685-699 (AITKENAEYERKTPG) the composition is skewed to basic and acidic residues. Thr697 carries the post-translational modification Phosphothreonine. Residues 704–716 (TTFVPLENSQPSD) show a composition bias toward polar residues. Position 712 is a phosphoserine; by ATM or ATR (Ser712). A Phosphoserine modification is found at Ser738. The span at 781–793 (KGTSSIHNDTESA) shows a compositional bias: polar residues. Residue Thr817 is modified to Phosphothreonine.

As to quaternary structure, interacts with RFM1. This interaction is required to recruit HST1.

The protein localises to the nucleus. Functionally, DNA-binding protein that specifically binds the regulatory region of middle sporulation genes (MSE). Required for the repression of middle sporulation genes during vegetative growth. Represses expression via the recruitment of histone deacetylase HST1. The polypeptide is Suppressor of mar1-1 protein (SUM1) (Saccharomyces cerevisiae (strain ATCC 204508 / S288c) (Baker's yeast)).